The chain runs to 88 residues: Small ribosomal subunit protein bS20 (88 aa).

The interval 1–25 (MANSAQARKRARQAVAQNAHNSSLR) is disordered.

This sequence belongs to the bacterial ribosomal protein bS20 family.

Its function is as follows. Binds directly to 16S ribosomal RNA. In Cupriavidus pinatubonensis (strain JMP 134 / LMG 1197) (Cupriavidus necator (strain JMP 134)), this protein is Small ribosomal subunit protein bS20.